A 641-amino-acid polypeptide reads, in one-letter code: MGVKNLWDILESCKKKLPLHHLQNKKVCVDLSCWLVQMYSANRSPAFAKDKVYLKNLFHRIRALLALNCTLLFVTDGAIPSLKLATYRRRLGSISHAAKESDQPNSHPSISLRRNKGSEFSCMIKEAKRLGMALGIPCLDGLEEAEAQCASLDLESLCDGCFTSDSDAFLFGARTVYRDVFIGEGGYVICYEMEDIEKTLGFGRNSLISLAVLLGSDYSNGVNGFGPETACRLVKSVGDNLILDQILSNGVKATRKCKGKNSGNKVDDMCPKASSCEVGMTQDSDGQFRDVINAYLEPKCHSPDSEAVQRVCGQHPFLRPQLQKICEEYFDWSPEKTDQYILPKIAERELRRFSDLRSASSALGIKPLLSEIPVPCPVLAIVKQRKVHGNECYEVSWRNIEGLQVSVVPGDLVKSACPEKITEFLEKKGEEKKQKRRARPKKSGQAAVKDVDEQLQELLLGIEADSGGILGATASVCQTLTAAYTVAVEDVVDLSSPSPPLRKLSKSQKKMMAEDVNVAGMNMNKMESESSFSTQSSTSDVDNQLIDLSSPLAGGDNGMKGGRRALADISNVGSHSTETDGGGGGGGGVASVGHGTTIDLSSPSPAIGDRSRVHHDDDDVIHERKARDLRMFLDSIRNELY.

An N-domain region spans residues 1–90 (MGVKNLWDIL…SLKLATYRRR (90 aa)). The interval 2–97 (GVKNLWDILE…RRRLGSISHA (96 aa)) is XPG-N domain. Mg(2+)-binding residues include Asp-30, Asp-76, Glu-144, Glu-146, Asp-165, Asp-167, and Asp-217. The XPG-I domain stretch occupies residues 132-217 (MALGIPCLDG…ISLAVLLGSD (86 aa)). I-domain stretches follow at residues 132-220 (MALG…DYSN) and 132-221 (MALG…YSNG). A 5'-3' exonuclease domain region spans residues 217 to 350 (DYSNGVNGFG…ILPKIAEREL (134 aa)). 2 disordered regions span residues 428 to 448 (KGEE…QAAV) and 572 to 615 (VGSH…RVHH). Gly residues predominate over residues 580-590 (DGGGGGGGGVA).

The protein belongs to the XPG/RAD2 endonuclease family. GEN subfamily. Mg(2+) serves as cofactor. In terms of tissue distribution, highly expressed in shoot apical meristem (SAM) and young leaves. Expressed in roots, flag leaf and panicles.

Its subcellular location is the nucleus. In terms of biological role, single-stranded DNA endonuclease activity in vitro. May not be active as double-stranded DNA endonuclease. Endonuclease which cleaves flap structures at the junction between single-stranded DNA and double-stranded DNA with a specific cleavage site in the 5' overhang strand exactly one nucleotide 3' of the branch point. Structure- and sequence-specific nuclease that resolves holliday junctions (HJs) by symmetrically oriented incisions in two opposing strands near the junction point, thus leading to ligatable products; HJs are physical links between homologous DNA molecules that arise as central intermediary structures during homologous recombination and repair in meiotic and somatic cells. Probably involved in the resolution of toxic replication structures to ensure genome stability, and to maintain telomere integrity and replication. This chain is Single-strand DNA endonuclease 1, found in Oryza sativa subsp. japonica (Rice).